The chain runs to 341 residues: NADH-quinone oxidoreductase subunit H (341 aa).

Transmembrane regions (helical) follow at residues leucine 4 to phenylalanine 24, proline 38 to isoleucine 58, isoleucine 70 to isoleucine 90, valine 115 to glycine 135, isoleucine 161 to valine 181, methionine 187 to leucine 207, leucine 239 to phenylalanine 259, isoleucine 275 to isoleucine 295, and valine 314 to glycine 334.

Belongs to the complex I subunit 1 family. In terms of assembly, NDH-1 is composed of 14 different subunits. Subunits NuoA, H, J, K, L, M, N constitute the membrane sector of the complex.

It is found in the cell membrane. It catalyses the reaction a quinone + NADH + 5 H(+)(in) = a quinol + NAD(+) + 4 H(+)(out). NDH-1 shuttles electrons from NADH, via FMN and iron-sulfur (Fe-S) centers, to quinones in the respiratory chain. The immediate electron acceptor for the enzyme in this species is believed to be ubiquinone. Couples the redox reaction to proton translocation (for every two electrons transferred, four hydrogen ions are translocated across the cytoplasmic membrane), and thus conserves the redox energy in a proton gradient. This subunit may bind ubiquinone. In Wolbachia pipientis wMel, this protein is NADH-quinone oxidoreductase subunit H.